A 318-amino-acid chain; its full sequence is Lipoyl synthase 1 (318 aa).

Positions 6–32 (DTISNPLRPRHPEKVNRPDSASPPKPD) are disordered. [4Fe-4S] cluster is bound by residues C60, C65, C71, C86, C90, C93, and S299. Residues 72 to 288 (WDKKHATFMI…EKVAYTKGFL (217 aa)) form the Radical SAM core domain.

The protein belongs to the radical SAM superfamily. Lipoyl synthase family. [4Fe-4S] cluster is required as a cofactor.

Its subcellular location is the cytoplasm. The enzyme catalyses [[Fe-S] cluster scaffold protein carrying a second [4Fe-4S](2+) cluster] + N(6)-octanoyl-L-lysyl-[protein] + 2 oxidized [2Fe-2S]-[ferredoxin] + 2 S-adenosyl-L-methionine + 4 H(+) = [[Fe-S] cluster scaffold protein] + N(6)-[(R)-dihydrolipoyl]-L-lysyl-[protein] + 4 Fe(3+) + 2 hydrogen sulfide + 2 5'-deoxyadenosine + 2 L-methionine + 2 reduced [2Fe-2S]-[ferredoxin]. The protein operates within protein modification; protein lipoylation via endogenous pathway; protein N(6)-(lipoyl)lysine from octanoyl-[acyl-carrier-protein]: step 2/2. Catalyzes the radical-mediated insertion of two sulfur atoms into the C-6 and C-8 positions of the octanoyl moiety bound to the lipoyl domains of lipoate-dependent enzymes, thereby converting the octanoylated domains into lipoylated derivatives. The protein is Lipoyl synthase 1 of Bradyrhizobium diazoefficiens (strain JCM 10833 / BCRC 13528 / IAM 13628 / NBRC 14792 / USDA 110).